A 314-amino-acid chain; its full sequence is DNA oxidative demethylase ALKBH2 (314 aa).

Residues 1-28 show a composition bias toward polar residues; sequence MTNPLNSTAANRSNQPSSDGISDGQITN. The disordered stretch occupies residues 1–75; it reads MTNPLNSTAA…KRFHYHQDQR (75 aa). The segment covering 57–75 has biased composition (basic and acidic residues); it reads NGKDDSDTKKRFHYHQDQR. Substrate-binding positions include tryptophan 132 and 160–163; that span reads ALVY. The Fe2OG dioxygenase domain maps to 194-314; the sequence is RFNSLLLNRY…RINLTFRLVL (121 aa). Residue 201 to 203 participates in 2-oxoglutarate binding; sequence NRY. Residues histidine 213 and aspartate 215 each coordinate Fe cation. Aspartate 216 contributes to the substrate binding site. Residues 242-271 are disordered; the sequence is KKDEESSQGKTGDSGPAKKRLKRSSREDQQ. Histidine 293 is a binding site for Fe cation. 2-oxoglutarate is bound by residues arginine 305 and 305–311; that span reads RINLTFR.

It belongs to the alkB family. Fe(2+) is required as a cofactor. Expressed ubiquitously, including in seedlings, leaves and flowers.

It is found in the nucleus. It catalyses the reaction a methylated nucleobase within DNA + 2-oxoglutarate + O2 = a nucleobase within DNA + formaldehyde + succinate + CO2. Dioxygenase that repairs alkylated DNA containing 1-methyladenine and 1-ethenoadenine by oxidative demethylation. Accepts double-stranded and single-stranded substrates, with a preference for dsDNA over ssDNA. Confers resistance to methylating agents such as methylmethanesulphonate (MMS). In Arabidopsis thaliana (Mouse-ear cress), this protein is DNA oxidative demethylase ALKBH2 (ALKBH2).